Reading from the N-terminus, the 129-residue chain is Histone H2A-IV (129 aa).

The protein belongs to the histone H2A family. The nucleosome is a histone octamer containing two molecules each of H2A, H2B, H3 and H4 assembled in one H3-H4 heterotetramer and two H2A-H2B heterodimers. The octamer wraps approximately 147 bp of DNA.

It is found in the nucleus. It localises to the chromosome. In terms of biological role, core component of nucleosome. Nucleosomes wrap and compact DNA into chromatin, limiting DNA accessibility to the cellular machineries which require DNA as a template. Histones thereby play a central role in transcription regulation, DNA repair, DNA replication and chromosomal stability. DNA accessibility is regulated via a complex set of post-translational modifications of histones, also called histone code, and nucleosome remodeling. The chain is Histone H2A-IV from Volvox carteri (Green alga).